We begin with the raw amino-acid sequence, 30 residues long: U5-ctenitoxin-Pk1b (30 aa).

Cystine bridges form between C6/C23 and C13/C29.

This sequence belongs to the neurotoxin 04 (omega-agtx) family. 02 (Tx1) subfamily. In terms of tissue distribution, expressed by the venom gland.

The protein resides in the secreted. In terms of biological role, lethal neurotoxin. Causes spastic paralysis and death in mice in 4-6 minutes after intracerebroventricular injection at dose levels of 1.5 ug per mouse. The sequence is that of U5-ctenitoxin-Pk1b from Phoneutria keyserlingi (Brazilian wandering spider).